A 151-amino-acid polypeptide reads, in one-letter code: Nucleoside diphosphate kinase (151 aa).

ATP contacts are provided by K10, F58, R86, T92, R103, and N113. Catalysis depends on H116, which acts as the Pros-phosphohistidine intermediate.

This sequence belongs to the NDK family. In terms of assembly, homotetramer. Mg(2+) is required as a cofactor.

Its subcellular location is the cytoplasm. It carries out the reaction dZDP + ATP = dZTP + ADP. The catalysed reaction is a 2'-deoxyribonucleoside 5'-diphosphate + ATP = a 2'-deoxyribonucleoside 5'-triphosphate + ADP. It catalyses the reaction a ribonucleoside 5'-diphosphate + ATP = a ribonucleoside 5'-triphosphate + ADP. Its pathway is purine metabolism. Functionally, major role in the synthesis of nucleoside triphosphates other than ATP. The ATP gamma phosphate is transferred to the NDP beta phosphate via a ping-pong mechanism, using a phosphorylated active-site intermediate. Its function is as follows. (Microbial infection) Catalyzes the phosphorylation of dZDP to dZTP, when the bacterium is infected by a phage that produces the substrate for the synthesis of dZTP (2- amino-2'-deoxyadenosine 5'-triphosphate), which is then used by the phage as a DNA polymerase substrate. The chain is Nucleoside diphosphate kinase from Synechococcus sp. (strain CC9605).